The primary structure comprises 168 residues: Oocyte-secreted protein 2 (168 aa).

An N-terminal signal peptide occupies residues 1–21 (MGVSMALEVLVYLAVLVWTCA).

The protein belongs to the PLAC1 family. In terms of tissue distribution, expressed in ovaries. Highly expressed in the germinal vesicles oocytes and metaphase II oocytes.

It is found in the secreted. It localises to the cytoplasm. The chain is Oocyte-secreted protein 2 (Oosp2) from Mus musculus (Mouse).